Here is a 154-residue protein sequence, read N- to C-terminus: Large ribosomal subunit protein uL23y (154 aa).

The protein belongs to the universal ribosomal protein uL23 family.

Functionally, binds to a specific region on the 26S rRNA. The protein is Large ribosomal subunit protein uL23y (RPL23AB) of Arabidopsis thaliana (Mouse-ear cress).